Here is a 288-residue protein sequence, read N- to C-terminus: UDP-3-O-acyl-N-acetylglucosamine deacetylase (288 aa).

Histidine 79, histidine 236, and aspartate 240 together coordinate Zn(2+). The active-site Proton donor is the histidine 263.

Belongs to the LpxC family. Zn(2+) is required as a cofactor.

The enzyme catalyses a UDP-3-O-[(3R)-3-hydroxyacyl]-N-acetyl-alpha-D-glucosamine + H2O = a UDP-3-O-[(3R)-3-hydroxyacyl]-alpha-D-glucosamine + acetate. It functions in the pathway glycolipid biosynthesis; lipid IV(A) biosynthesis; lipid IV(A) from (3R)-3-hydroxytetradecanoyl-[acyl-carrier-protein] and UDP-N-acetyl-alpha-D-glucosamine: step 2/6. Catalyzes the hydrolysis of UDP-3-O-myristoyl-N-acetylglucosamine to form UDP-3-O-myristoylglucosamine and acetate, the committed step in lipid A biosynthesis. This chain is UDP-3-O-acyl-N-acetylglucosamine deacetylase, found in Rickettsia felis (strain ATCC VR-1525 / URRWXCal2) (Rickettsia azadi).